We begin with the raw amino-acid sequence, 975 residues long: Protein spalten (975 aa).

Disordered stretches follow at residues 1-31 and 64-99; these read MKKM…QLAQ and NLAQ…SNNN. The segment covering 8–17 has biased composition (basic and acidic residues); it reads NKKEKKEEQS. A coiled-coil region spans residues 21–70; the sequence is SSLAQQHQLAQQQYQLQQQQLQLQYQQHQQQLQLAQQQKQNEQNLAQLST. Residues 114–458 form the G-alpha domain; that stretch reads FCGTIMILGH…DAEKRGFTTP (345 aa). The segment at 117–130 is G1 motif; the sequence is TIMILGHTESGKTT. GTP is bound by residues 122–129, 261–267, 286–290, and 373–376; these read GHTESGKT, ISAYDQK, GCSGK, and NTSD. The G2 motif stretch occupies residues 259 to 267; that stretch reads DIISAYDQK. The interval 282-291 is G3 motif; sequence VDLFGCSGKQ. The interval 369 to 376 is G4 motif; sequence YLIFNTSD. The G5 motif stretch occupies residues 427-432; that stretch reads VNLLDK. 2 disordered regions span residues 455 to 520 and 541 to 700; these read FTTP…GSST and DNDS…VGSK. Low complexity-rich tracts occupy residues 460 to 478, 500 to 515, and 544 to 587; these read NQSN…SRNS, LKNV…NTTT, and SSYS…NNAT. Residues 595–688 show a composition bias toward basic and acidic residues; sequence PPKEPKPVKP…DGAAESKKNG (94 aa). The PPM-type phosphatase domain maps to 704 to 972; it reads ESGFGSLQGR…DNITVLVVIL (269 aa). 4 residues coordinate Mn(2+): D749, G750, D920, and D963.

This sequence in the N-terminal section; belongs to the G-alpha family. It in the C-terminal section; belongs to the PP2C family. As to quaternary structure, g proteins are composed of 3 units; alpha, beta and gamma. The alpha chain contains the guanine nucleotide binding site. Requires Mg(2+) as cofactor. It depends on Mn(2+) as a cofactor.

It localises to the cytoplasm. It is found in the cytosol. The protein resides in the cell membrane. It catalyses the reaction O-phospho-L-seryl-[protein] + H2O = L-seryl-[protein] + phosphate. It carries out the reaction O-phospho-L-threonyl-[protein] + H2O = L-threonyl-[protein] + phosphate. Inhibited by 50 mM NaF (sodium fluoride). Its function is as follows. Involved in cell-type differentiation and morphogenesis. Dephosphorylates casein; in vitro. May also be involved as modulators or transducers in various transmembrane signaling systems. This chain is Protein spalten (spnA), found in Dictyostelium discoideum (Social amoeba).